A 651-amino-acid chain; its full sequence is Protein SCARECROW 1 (651 aa).

Disordered regions lie at residues 1–33 (MGSSSLLLFPSSSSSATHSSYSPSSSSHAITSL) and 188–277 (SDPA…KQRD). Pro residues predominate over residues 190–228 (PAPPPPPPPSHPALLPPDATAPPPPPTSVAALPPPPPPQ). A coiled-coil region spans residues 253–280 (TAEETAAAAAAAKERKEEQRRKQRDEEG). Over residues 254 to 263 (AEETAAAAAA) the composition is skewed to low complexity. Residues 264-277 (AKERKEEQRRKQRD) show a composition bias toward basic and acidic residues. Residues 274–644 (KQRDEEGLHL…LCLLTASAWR (371 aa)) form the GRAS domain. The segment at 281–345 (LHLLTLLLQC…VSSCLGLYAP (65 aa)) is leucine repeat I (LRI). The LxCxE motif motif lies at 288–292 (LQCAE). The VHIID stretch occupies residues 364-429 (FQVFNGISPF…GGPPRVRLTG (66 aa)). The VHIID signature appears at 395–399 (VHIID). The tract at residues 439–471 (ATGKRLSDFADTLGLPFEFCPVADKAGNLDPEK) is leucine repeat II (LRII). A PFYRE region spans residues 480–567 (VAVHWLRHSL…QQLLSREIRN (88 aa)). The interval 570–644 (AVGGPARTGD…LCLLTASAWR (75 aa)) is SAW.

It belongs to the GRAS family. As to quaternary structure, interacts with SHR1, but not with SHR2. In terms of tissue distribution, expressed in the initial daughter cell before its asymmetric division and remains expressed in the endodermal cell layer after the division.

The protein resides in the nucleus. In terms of biological role, transcription factor required for quiescent center cells specification and maintenance of surrounding stem cells, and for the asymmetric cell division involved in radial pattern formation in roots. Essential for cell division but not differentiation of the ground tissue. Regulates the radial organization of the shoot axial organs. Restricts SHR movment and sequesters it into the nucleus of the endodermis. This chain is Protein SCARECROW 1 (SCR1), found in Oryza sativa subsp. japonica (Rice).